The primary structure comprises 488 residues: Glutamyl-tRNA(Gln) amidotransferase subunit A (488 aa).

Residues lysine 80 and serine 155 each act as charge relay system in the active site. The Acyl-ester intermediate role is filled by serine 179.

Belongs to the amidase family. GatA subfamily. As to quaternary structure, heterotrimer of A, B and C subunits.

The catalysed reaction is L-glutamyl-tRNA(Gln) + L-glutamine + ATP + H2O = L-glutaminyl-tRNA(Gln) + L-glutamate + ADP + phosphate + H(+). Functionally, allows the formation of correctly charged Gln-tRNA(Gln) through the transamidation of misacylated Glu-tRNA(Gln) in organisms which lack glutaminyl-tRNA synthetase. The reaction takes place in the presence of glutamine and ATP through an activated gamma-phospho-Glu-tRNA(Gln). This chain is Glutamyl-tRNA(Gln) amidotransferase subunit A, found in Chloroflexus aggregans (strain MD-66 / DSM 9485).